The sequence spans 242 residues: Small ribosomal subunit protein uS2 (242 aa).

This sequence belongs to the universal ribosomal protein uS2 family.

This Shewanella sediminis (strain HAW-EB3) protein is Small ribosomal subunit protein uS2.